Consider the following 593-residue polypeptide: Transmembrane 9 superfamily member 4 (593 aa).

A signal peptide spans 1 to 25 (MVLLPSMTSLLLVFLFLYGVSPVIS). The Lumenal portion of the chain corresponds to 26 to 230 (DGSDHRYKVG…SMPHHLEIHW (205 aa)). The helical transmembrane segment at 231-251 (FSIINSCVTVLLLTGFLATIL) threads the bilayer. Residues 252 to 303 (MRVLKNDFVKYAHDEEAVDDQEETGWKLIHGDVFRFPKHKSLLAAALGSGTQ) are Cytoplasmic-facing. The helical transmembrane segment at 304–324 (LFTLAVFIFMLALVGVFYPYN) threads the bilayer. The Lumenal portion of the chain corresponds to 325–326 (RG). The helical transmembrane segment at 327 to 347 (ALFTALVVIYALTSGIAGYTA) threads the bilayer. At 348-366 (ASFYCQLEGTNWVRNVILT) the chain is on the cytoplasmic side. Residues 367 to 387 (GSLFCGPLLITFSFLNTVAIA) traverse the membrane as a helical segment. At 388–398 (YQATAALPFGT) the chain is on the lumenal side. The chain crosses the membrane as a helical span at residues 399–419 (IVVIFLIWALVTSPLLILGGI). Residues 420 to 453 (AGKNRKSEFQAPCRTTKYPREIPPMRWYRRTLPQ) lie on the Cytoplasmic side of the membrane. The chain crosses the membrane as a helical span at residues 454 to 474 (MAMAGFLPFSAIYIELYYIFA). Residues 475–486 (SVWGHRIYTIYS) are Lumenal-facing. A helical transmembrane segment spans residues 487–507 (ILSIVFLILVIVTAFITVALT). Over 508-522 (YFQLAAEDHEWWWRS) the chain is Cytoplasmic. The helical transmembrane segment at 523-543 (LLCGGSTGLFIYAYCLYYYYA) threads the bilayer. Over 544 to 554 (RSDMSGFMQTS) the chain is Lumenal. The helical transmembrane segment at 555–575 (FFFGYMACICYGFFLMLGTIG) threads the bilayer. The Cytoplasmic segment spans residues 576–593 (FCASLLFVRHIYRSIKCE). The Endoplasmic reticulum export signal motif lies at 582 to 587 (FVRHIY). The Golgi retention signal signature appears at 591–593 (KCE).

This sequence belongs to the nonaspanin (TM9SF) (TC 9.A.2) family.

Its subcellular location is the endosome membrane. It is found in the golgi apparatus membrane. This Arabidopsis thaliana (Mouse-ear cress) protein is Transmembrane 9 superfamily member 4.